A 253-amino-acid chain; its full sequence is Small ribosomal subunit protein uS5 (253 aa).

The tract at residues 1–30 (MAESAPRGFGRGGRGGRGRGRGRRGAKRDE) is disordered. Positions 14–26 (RGGRGRGRGRRGA) are enriched in basic residues. An S5 DRBM domain is found at 75-138 (LNDEVMKVVP…IMGKLSIMPI (64 aa)).

Belongs to the universal ribosomal protein uS5 family. In terms of assembly, component of the small ribosomal subunit (SSU). Mature yeast ribosomes consist of a small (40S) and a large (60S) subunit. The 40S small subunit contains 1 molecule of ribosomal RNA (18S rRNA) and at least 33 different proteins. The large 60S subunit contains 3 rRNA molecules (25S, 5.8S and 5S rRNA) and at least 46 different proteins. Interacts with snoRNA U3. Interacts with MPP10. Component of the ribosomal small subunit (SSU) processome composed of at least 40 protein subunits and snoRNA U3.

It localises to the cytoplasm. Component of the ribosome, a large ribonucleoprotein complex responsible for the synthesis of proteins in the cell. The small ribosomal subunit (SSU) binds messenger RNAs (mRNAs) and translates the encoded message by selecting cognate aminoacyl-transfer RNA (tRNA) molecules. The large subunit (LSU) contains the ribosomal catalytic site termed the peptidyl transferase center (PTC), which catalyzes the formation of peptide bonds, thereby polymerizing the amino acids delivered by tRNAs into a polypeptide chain. The nascent polypeptides leave the ribosome through a tunnel in the LSU and interact with protein factors that function in enzymatic processing, targeting, and the membrane insertion of nascent chains at the exit of the ribosomal tunnel. Plays a role in the assembly and function of the 40S ribosomal subunit. Mutations in this protein affects the control of translational fidelity. Involved in nucleolar processing of pre-18S ribosomal RNA and ribosome assembly. Its function is as follows. Component of the ribosome, a large ribonucleoprotein complex responsible for the synthesis of proteins in the cell. The small ribosomal subunit (SSU) binds messenger RNAs (mRNAs) and translates the encoded message by selecting cognate aminoacyl-transfer RNA (tRNA) molecules. The large subunit (LSU) contains the ribosomal catalytic site termed the peptidyl transferase center (PTC), which catalyzes the formation of peptide bonds, thereby polymerizing the amino acids delivered by tRNAs into a polypeptide chain. The nascent polypeptides leave the ribosome through a tunnel in the LSU and interact with protein factors that function in enzymatic processing, targeting, and the membrane insertion of nascent chains at the exit of the ribosomal tunnel. uS5 is important for the assembly and function of the 40S ribosomal subunit. Mutations in this protein affects the control of translational fidelity. Involved in nucleolar processing of pre-18S ribosomal RNA and ribosome assembly. In Schizosaccharomyces pombe (strain 972 / ATCC 24843) (Fission yeast), this protein is Small ribosomal subunit protein uS5 (rps2).